Consider the following 833-residue polypeptide: Leucine--tRNA ligase (833 aa).

The 'HIGH' region motif lies at 41 to 52 (PYPSGAGLHVGH). Positions 610-614 (KMSKS) match the 'KMSKS' region motif. Residue lysine 613 participates in ATP binding.

The protein belongs to the class-I aminoacyl-tRNA synthetase family.

It localises to the cytoplasm. It catalyses the reaction tRNA(Leu) + L-leucine + ATP = L-leucyl-tRNA(Leu) + AMP + diphosphate. The protein is Leucine--tRNA ligase of Streptococcus pneumoniae serotype 19F (strain G54).